We begin with the raw amino-acid sequence, 440 residues long: Glycerophosphocholine cholinephosphodiesterase ENPP6 (440 aa).

Positions 1–22 (MAVKLGTLLLALALGLAQPASA) are cleaved as a signal peptide. Residues D32, S71, and N92 each coordinate substrate. 2 residues coordinate Zn(2+): D32 and S71. S71 (nucleophile) is an active-site residue. S71 carries the phosphoserine modification. 2 N-linked (GlcNAc...) asparagine glycosylation sites follow: N100 and N118. A disulfide bridge connects residues C142 and C154. Position 193 (D193) interacts with substrate. Residues D193, H197, D240, and H241 each coordinate Zn(2+). A substrate-binding site is contributed by H241. Residue N341 is glycosylated (N-linked (GlcNAc...) asparagine). H354 is a binding site for substrate. H354 provides a ligand contact to Zn(2+). N404 carries an N-linked (GlcNAc...) asparagine glycan. A418 carries GPI-anchor amidated alanine lipidation. The propeptide at 419–440 (GTTPPVQPSHCALALILLFLLA) is removed in mature form.

It belongs to the nucleotide pyrophosphatase/phosphodiesterase family. Homodimer; disulfide-linked. Homotetramer. Requires Zn(2+) as cofactor.

The protein localises to the cell membrane. The catalysed reaction is sn-glycerol 3-phosphocholine + H2O = phosphocholine + glycerol + H(+). It carries out the reaction a 1-acyl-sn-glycero-3-phosphocholine + H2O = a 1-acyl-sn-glycerol + phosphocholine + H(+). The enzyme catalyses a 1-O-alkyl-sn-glycero-3-phosphocholine + H2O = a 1-O-alkyl-sn-glycerol + phosphocholine + H(+). It catalyses the reaction 1-dodecanoyl-sn-glycero-3-phosphocholine + H2O = 1-dodecanoyl-sn-glycerol + phosphocholine + H(+). The catalysed reaction is 1-hexadecanoyl-sn-glycero-3-phosphocholine + H2O = 1-hexadecanoyl-sn-glycerol + phosphocholine + H(+). It carries out the reaction 1-(5Z,8Z,11Z,14Z-eicosatetraenoyl)-sn-glycero-3-phosphocholine + H2O = 1-(5Z,8Z,11Z,14Z-eicosatetraenoyl)-sn-glycerol + phosphocholine + H(+). The enzyme catalyses 1-tetradecanoyl-sn-glycero-3-phosphocholine + H2O = 1-tetradecanoyl-sn-glycerol + phosphocholine + H(+). It catalyses the reaction sphing-4-enine-phosphocholine + H2O = sphing-4-enine + phosphocholine + H(+). The catalysed reaction is 1-(9Z-octadecenoyl)-sn-glycero-3-phosphocholine + H2O = 1-(9Z-octadecenoyl)-sn-glycerol + phosphocholine + H(+). It carries out the reaction 1-(9Z,12Z)-octadecadienoyl-sn-glycero-3-phosphocholine + H2O = 1-(9Z,12Z-octadecadienoyl)-sn-glycerol + phosphocholine + H(+). The enzyme catalyses glycero-2-phosphocholine + H2O = phosphocholine + glycerol + H(+). Its activity is regulated as follows. Inhibited by EDTA and EGTA in vitro. Functionally, choline-specific glycerophosphodiesterase that hydrolyzes glycerophosphocholine (GPC) and lysophosphatidylcholine (LPC) and contributes to supplying choline to the cells. Has a preference for LPC with short (12:0 and 14:0) or polyunsaturated (18:2 and 20:4) fatty acids. In vitro, hydrolyzes only choline-containing lysophospholipids, such as sphingosylphosphorylcholine (SPC), platelet-activating factor (PAF) and lysoPAF, but not other lysophospholipids. This chain is Glycerophosphocholine cholinephosphodiesterase ENPP6, found in Pongo abelii (Sumatran orangutan).